Here is a 519-residue protein sequence, read N- to C-terminus: GMP synthase [glutamine-hydrolyzing] (519 aa).

The region spanning 4 to 201 (AILILDFGSQ…VHDICDAGYD (198 aa)) is the Glutamine amidotransferase type-1 domain. Residue cysteine 81 is the Nucleophile of the active site. Active-site residues include histidine 175 and glutamate 177. The GMPS ATP-PPase domain maps to 202–394 (WNMPDYVEEA…LGLPRDLVFR (193 aa)). 229–235 (SGGVDSS) lines the ATP pocket.

As to quaternary structure, homodimer.

The enzyme catalyses XMP + L-glutamine + ATP + H2O = GMP + L-glutamate + AMP + diphosphate + 2 H(+). Its pathway is purine metabolism; GMP biosynthesis; GMP from XMP (L-Gln route): step 1/1. In terms of biological role, catalyzes the synthesis of GMP from XMP. The protein is GMP synthase [glutamine-hydrolyzing] of Nitrosomonas eutropha (strain DSM 101675 / C91 / Nm57).